A 462-amino-acid chain; its full sequence is MSYINFSAIILAAGRGNRMLSDTPKVLYQIGGKFMLQHLIDSVMQVGVSSIYVVHGYKGEMIIKEINTNQYKIPVYWILQHDLTGTGDAVQRVLPFISDDEEVLVLYGDVPFVSYKTLQRLHVIKSQCDISMLTATLPNPKGYGRIVRNQEGSVVSIIEHDDIINDDQKKIKEVSTGIFIAISNHLKCWLSTLTTHKSKNEFYLTDIIQIAHQSGYSIHTMCPDDTFEIMGVNSKSDFVDLDKQYQQRKVQCLLSSGLMIIDPNRFDLRGTLVHGKDVYIDINVIIEGHVSLGNRVKIGASCILKDTIVADDVEIYPFSIIENTTIGFQSKVGPFVRLRPGTELKEKSHVGNFVEIKNTRLGEQSKVKHLSYLGDAEIGNQVNIGAGTIICNYDGMMKHQTIIGDDVFIGADSQLVAPITIGKNVTIGAGTTVTRDVAANETIISRIRQFSILNWKRLKNKK.

Positions 1–235 (MSYINFSAII…TFEIMGVNSK (235 aa)) are pyrophosphorylase. Residues 11–14 (LAAG), K25, Q80, 85–86 (GT), 107–109 (YGD), G144, E159, and N233 each bind UDP-N-acetyl-alpha-D-glucosamine. D109 is a binding site for Mg(2+). N233 contacts Mg(2+). Positions 236–256 (SDFVDLDKQYQQRKVQCLLSS) are linker. Residues 257–462 (GLMIIDPNRF…LNWKRLKNKK (206 aa)) are N-acetyltransferase. Residues R339 and K357 each coordinate UDP-N-acetyl-alpha-D-glucosamine. The Proton acceptor role is filled by H369. UDP-N-acetyl-alpha-D-glucosamine is bound by residues Y372 and N383. Acetyl-CoA is bound by residues A386, 392-393 (NY), A429, and R446.

In the N-terminal section; belongs to the N-acetylglucosamine-1-phosphate uridyltransferase family. This sequence in the C-terminal section; belongs to the transferase hexapeptide repeat family. Homotrimer. It depends on Mg(2+) as a cofactor.

It localises to the cytoplasm. It carries out the reaction alpha-D-glucosamine 1-phosphate + acetyl-CoA = N-acetyl-alpha-D-glucosamine 1-phosphate + CoA + H(+). The catalysed reaction is N-acetyl-alpha-D-glucosamine 1-phosphate + UTP + H(+) = UDP-N-acetyl-alpha-D-glucosamine + diphosphate. Its pathway is nucleotide-sugar biosynthesis; UDP-N-acetyl-alpha-D-glucosamine biosynthesis; N-acetyl-alpha-D-glucosamine 1-phosphate from alpha-D-glucosamine 6-phosphate (route II): step 2/2. It functions in the pathway nucleotide-sugar biosynthesis; UDP-N-acetyl-alpha-D-glucosamine biosynthesis; UDP-N-acetyl-alpha-D-glucosamine from N-acetyl-alpha-D-glucosamine 1-phosphate: step 1/1. It participates in bacterial outer membrane biogenesis; LPS lipid A biosynthesis. Catalyzes the last two sequential reactions in the de novo biosynthetic pathway for UDP-N-acetylglucosamine (UDP-GlcNAc). The C-terminal domain catalyzes the transfer of acetyl group from acetyl coenzyme A to glucosamine-1-phosphate (GlcN-1-P) to produce N-acetylglucosamine-1-phosphate (GlcNAc-1-P), which is converted into UDP-GlcNAc by the transfer of uridine 5-monophosphate (from uridine 5-triphosphate), a reaction catalyzed by the N-terminal domain. In Blochmanniella pennsylvanica (strain BPEN), this protein is Bifunctional protein GlmU.